Consider the following 53-residue polypeptide: Small ribosomal subunit protein uS14 (53 aa).

The Zn(2+) site is built by cysteine 18, cysteine 21, cysteine 36, and cysteine 39.

The protein belongs to the universal ribosomal protein uS14 family. Zinc-binding uS14 subfamily. As to quaternary structure, part of the 30S ribosomal subunit. Requires Zn(2+) as cofactor.

Its function is as follows. Binds 16S rRNA, required for the assembly of 30S particles. This Thermoplasma volcanium (strain ATCC 51530 / DSM 4299 / JCM 9571 / NBRC 15438 / GSS1) protein is Small ribosomal subunit protein uS14.